A 231-amino-acid chain; its full sequence is 7-cyano-7-deazaguanine synthase (231 aa).

8–18 (FSGGQDSTTCL) is a binding site for ATP. Zn(2+)-binding residues include Cys-188, Cys-197, Cys-200, and Cys-203.

The protein belongs to the QueC family. Zn(2+) serves as cofactor.

The catalysed reaction is 7-carboxy-7-deazaguanine + NH4(+) + ATP = 7-cyano-7-deazaguanine + ADP + phosphate + H2O + H(+). The protein operates within purine metabolism; 7-cyano-7-deazaguanine biosynthesis. Catalyzes the ATP-dependent conversion of 7-carboxy-7-deazaguanine (CDG) to 7-cyano-7-deazaguanine (preQ(0)). The polypeptide is 7-cyano-7-deazaguanine synthase (Citrobacter koseri (strain ATCC BAA-895 / CDC 4225-83 / SGSC4696)).